Here is a 97-residue protein sequence, read N- to C-terminus: Large ribosomal subunit protein uL23 (97 aa).

Belongs to the universal ribosomal protein uL23 family. Part of the 50S ribosomal subunit. Contacts protein L29, and trigger factor when it is bound to the ribosome.

Its function is as follows. One of the early assembly proteins it binds 23S rRNA. One of the proteins that surrounds the polypeptide exit tunnel on the outside of the ribosome. Forms the main docking site for trigger factor binding to the ribosome. The chain is Large ribosomal subunit protein uL23 from Anaeromyxobacter dehalogenans (strain 2CP-C).